The following is a 252-amino-acid chain: Probable transcriptional regulatory protein Moth_1704 (252 aa).

The protein belongs to the TACO1 family.

The protein resides in the cytoplasm. This chain is Probable transcriptional regulatory protein Moth_1704, found in Moorella thermoacetica (strain ATCC 39073 / JCM 9320).